Reading from the N-terminus, the 154-residue chain is Aspartate carbamoyltransferase regulatory chain (154 aa).

Zn(2+)-binding residues include cysteine 109, cysteine 114, cysteine 138, and cysteine 141.

Belongs to the PyrI family. In terms of assembly, contains catalytic and regulatory chains. Zn(2+) is required as a cofactor.

Its function is as follows. Involved in allosteric regulation of aspartate carbamoyltransferase. This is Aspartate carbamoyltransferase regulatory chain from Aliivibrio fischeri (strain ATCC 700601 / ES114) (Vibrio fischeri).